Here is an 85-residue protein sequence, read N- to C-terminus: Progonadoliberin-2 (85 aa).

A signal peptide spans 1–23 (MCASRLVLLLGLLLCVGAHLSSG). A Pyrrolidone carboxylic acid modification is found at Q24. The residue at position 33 (G33) is a Glycine amide.

The protein belongs to the GnRH family. Midbrain tegmentum.

Its subcellular location is the secreted. Stimulates the secretion of gonadotropins. This chain is Progonadoliberin-2 (gnrh2), found in Verasper moseri (Barfin flounder).